Reading from the N-terminus, the 269-residue chain is Glutamate racemase (269 aa).

Substrate-binding positions include 7–8 (DS) and 39–40 (YG). C70 (proton donor/acceptor) is an active-site residue. Substrate is bound at residue 71–72 (NT). The Proton donor/acceptor role is filled by C194. A substrate-binding site is contributed by 195–196 (TH).

This sequence belongs to the aspartate/glutamate racemases family.

The catalysed reaction is L-glutamate = D-glutamate. It functions in the pathway cell wall biogenesis; peptidoglycan biosynthesis. Provides the (R)-glutamate required for cell wall biosynthesis. In Ruegeria sp. (strain TM1040) (Silicibacter sp.), this protein is Glutamate racemase.